A 273-amino-acid chain; its full sequence is 2,3,4,5-tetrahydropyridine-2,6-dicarboxylate N-succinyltransferase (273 aa).

Substrate contacts are provided by arginine 104 and aspartate 141.

Belongs to the transferase hexapeptide repeat family. In terms of assembly, homotrimer.

The protein localises to the cytoplasm. The enzyme catalyses (S)-2,3,4,5-tetrahydrodipicolinate + succinyl-CoA + H2O = (S)-2-succinylamino-6-oxoheptanedioate + CoA. Its pathway is amino-acid biosynthesis; L-lysine biosynthesis via DAP pathway; LL-2,6-diaminopimelate from (S)-tetrahydrodipicolinate (succinylase route): step 1/3. This chain is 2,3,4,5-tetrahydropyridine-2,6-dicarboxylate N-succinyltransferase, found in Psychrobacter arcticus (strain DSM 17307 / VKM B-2377 / 273-4).